Here is a 324-residue protein sequence, read N- to C-terminus: Beta-ketoacyl-[acyl-carrier-protein] synthase III (324 aa).

Active-site residues include Cys112 and His249. An ACP-binding region spans residues 250-254 (QANRR). The active site involves Asn279.

The protein belongs to the thiolase-like superfamily. FabH family. Homodimer.

It is found in the cytoplasm. It carries out the reaction malonyl-[ACP] + acetyl-CoA + H(+) = 3-oxobutanoyl-[ACP] + CO2 + CoA. Its pathway is lipid metabolism; fatty acid biosynthesis. In terms of biological role, catalyzes the condensation reaction of fatty acid synthesis by the addition to an acyl acceptor of two carbons from malonyl-ACP. Catalyzes the first condensation reaction which initiates fatty acid synthesis and may therefore play a role in governing the total rate of fatty acid production. Possesses both acetoacetyl-ACP synthase and acetyl transacylase activities. Its substrate specificity determines the biosynthesis of branched-chain and/or straight-chain of fatty acids. In Streptococcus pyogenes serotype M4 (strain MGAS10750), this protein is Beta-ketoacyl-[acyl-carrier-protein] synthase III.